The following is a 1460-amino-acid chain: Cilia- and flagella-associated protein 43 (1460 aa).

WD repeat units lie at residues 46-87, 91-132, 184-221, 303-342, 428-468, 529-569, 589-628, 911-951, and 1129-1170; these read EGRY…HLQC, VATV…RLVK, SKGHYFHSCVWGTEGLYCGAGRGQVVLLDELRTDMKNY, RRRSASDTVKLLVLGGLVVIVCLDGSLVTYDQDTNTAGHT, IFAC…DSAS, MRDH…MKLP, FGRGGITCLSVWNAAGGFVCGGNDSVVHLVPVGKSPIHYS, EIDP…VTEV, and NRRF…CRAV. Coiled-coil stretches lie at residues 1170-1214 and 1399-1446; these read VVEA…AEEA and LGEH…LREA.

The protein belongs to the CFAP43 family.

It is found in the cell projection. The protein localises to the cilium. It localises to the flagellum. Its subcellular location is the cytoplasm. The protein resides in the cytoskeleton. It is found in the flagellum axoneme. Its function is as follows. Flagellar protein involved in flagellum axoneme organization and function. The protein is Cilia- and flagella-associated protein 43 of Trypanosoma brucei brucei (strain 927/4 GUTat10.1).